The chain runs to 906 residues: Protein translocase subunit SecA (906 aa).

Residues Gln-87, 105-109 (GEGKT), and Asp-507 contribute to the ATP site. The segment covering 553-563 (RHESRRIDNQL) has biased composition (basic and acidic residues). Disordered regions lie at residues 553–576 (RHES…PGSS) and 854–906 (LEEP…GRLA). Cys-890, Cys-892, Cys-901, and His-902 together coordinate Zn(2+). A compositionally biased stretch (basic residues) spans 896 to 906 (KKYKQCHGRLA).

It belongs to the SecA family. In terms of assembly, monomer and homodimer. Part of the essential Sec protein translocation apparatus which comprises SecA, SecYEG and auxiliary proteins SecDF-YajC and YidC. The cofactor is Zn(2+).

The protein localises to the cell inner membrane. Its subcellular location is the cytoplasm. It carries out the reaction ATP + H2O + cellular proteinSide 1 = ADP + phosphate + cellular proteinSide 2.. Functionally, part of the Sec protein translocase complex. Interacts with the SecYEG preprotein conducting channel. Has a central role in coupling the hydrolysis of ATP to the transfer of proteins into and across the cell membrane, serving both as a receptor for the preprotein-SecB complex and as an ATP-driven molecular motor driving the stepwise translocation of polypeptide chains across the membrane. The polypeptide is Protein translocase subunit SecA (Methylococcus capsulatus (strain ATCC 33009 / NCIMB 11132 / Bath)).